Consider the following 726-residue polypeptide: Catalase-peroxidase (726 aa).

The tryptophyl-tyrosyl-methioninium (Trp-Tyr) (with M-239) cross-link spans 90–213 (WHAAGTYRIG…LAAVQMGLIY (124 aa)). Residue histidine 91 is the Proton acceptor of the active site. A cross-link (tryptophyl-tyrosyl-methioninium (Tyr-Met) (with W-90)) is located at residues 213–239 (YVNPEGPNGNPDPLAAARDIRETFARM). Histidine 254 provides a ligand contact to heme b. A disordered region spans residues 334–359 (AHQWKPKHGAGANTVPDAHDPSKRHA).

The protein belongs to the peroxidase family. Peroxidase/catalase subfamily. In terms of assembly, homodimer or homotetramer. Requires heme b as cofactor. In terms of processing, formation of the three residue Trp-Tyr-Met cross-link is important for the catalase, but not the peroxidase activity of the enzyme.

The catalysed reaction is H2O2 + AH2 = A + 2 H2O. It carries out the reaction 2 H2O2 = O2 + 2 H2O. Functionally, bifunctional enzyme with both catalase and broad-spectrum peroxidase activity. The protein is Catalase-peroxidase of Bradyrhizobium sp. (strain BTAi1 / ATCC BAA-1182).